A 268-amino-acid polypeptide reads, in one-letter code: MIVIEPTILYEAAALYTRYTANGGDSNDVVALLVGPIVQTLSIPSSTSSAPLVTSVREILELACNDAVLDKSFLNERLEHCKLQDFPLVGCLVLGNRVDHRVRSIAHQLQEATAFPYLMLFPSNFDLTQLKLFRLPDFNNKDQFWKEEWSTEQYEIAENPSGYASALHTLTQLDDGSETNAINVSTQKFAIQKLQSCAMRVREQLEYNPTTFASRDLSSISYICRLLDTMDLPSDTFSHQKSQASFLCALQQILRCTELIEKVYSNGS.

This is an uncharacterized protein from Schizosaccharomyces pombe (strain 972 / ATCC 24843) (Fission yeast).